Here is a 446-residue protein sequence, read N- to C-terminus: Sorting nexin-30 (446 aa).

Positions 1 to 18 are enriched in polar residues; sequence MSGSSTPKSLPTSGQQSL. A disordered region spans residues 1-84; sequence MSGSSTPKSL…SSPASSSSLL (84 aa). The span at 70–84 shows a compositional bias: low complexity; it reads TPADTSSPASSSSLL. Positions 98–219 constitute a PX domain; the sequence is RDLFVTVDDP…VFLTAKDLNS (122 aa). A 1,2-diacyl-sn-glycero-3-phospho-(1D-myo-inositol-3-phosphate) contacts are provided by R141, Q143, K171, and R185. The 204-residue stretch at 243 to 446 folds into the BAR domain; sequence KLRNRPVEFA…PLLQDKQEPK (204 aa).

The protein belongs to the sorting nexin family.

Its subcellular location is the early endosome membrane. Functionally, involved in the regulation of endocytosis and in several stages of intracellular trafficking. Together with snx4, involved in autophagosome assembly. This is Sorting nexin-30 (snx30) from Xenopus tropicalis (Western clawed frog).